The chain runs to 411 residues: Ubiquitin-binding protein CUE5 (411 aa).

A compositionally biased stretch (basic and acidic residues) spans 1–12 (MEEKEGIKDSSL). Disordered regions lie at residues 1 to 102 (MEEK…NPIL) and 142 to 411 (ESGK…DDEM). Lys-15 is covalently cross-linked (Glycyl lysine isopeptide (Lys-Gly) (interchain with G-Cter in ubiquitin)). Phosphoserine occurs at positions 21 and 36. Residues 25–58 (DISKTTDVDLNSDGKKDNDTSAKDGTPKVEEKVN) are compositionally biased toward basic and acidic residues. Lys-59 is covalently cross-linked (Glycyl lysine isopeptide (Lys-Gly) (interchain with G-Cter in ubiquitin)). A Phosphothreonine modification is found at Thr-70. Lys-76 participates in a covalent cross-link: Glycyl lysine isopeptide (Lys-Gly) (interchain with G-Cter in ubiquitin). Ser-91 is modified (phosphoserine). Residues 97-140 (KENPILQELKDAFPNLEEKYIKAVIIASQGVLSPAFNALLFLSD) enclose the CUE domain. A Glycyl lysine isopeptide (Lys-Gly) (interchain with G-Cter in ubiquitin) cross-link involves residue Lys-156. At Thr-167 the chain carries Phosphothreonine. A compositionally biased stretch (basic and acidic residues) spans 209-219 (NPNEREQHHED). Position 220 is a phosphoserine (Ser-220). The span at 230 to 242 (VEKDLPELTDRAG) shows a compositional bias: basic and acidic residues. Residues 245–256 (LQDTANKVSNWI) are compositionally biased toward polar residues. Residues Ser-309 and Ser-318 each carry the phosphoserine modification. Phosphothreonine is present on Thr-346. Ser-348 carries the post-translational modification Phosphoserine. Position 352 is a phosphothreonine (Thr-352). Lys-354 participates in a covalent cross-link: Glycyl lysine isopeptide (Lys-Gly) (interchain with G-Cter in ubiquitin). Phosphothreonine occurs at positions 364 and 367. The AIM signature appears at 373 to 376 (WQPL). Lys-396 participates in a covalent cross-link: Glycyl lysine isopeptide (Lys-Gly) (interchain with G-Cter in ubiquitin). The span at 399 to 411 (DEDEFLINSDDEM) shows a compositional bias: acidic residues. A Phosphoserine modification is found at Ser-407.

In terms of assembly, interacts with ATG8 (via AIM motif), CLB2, and ubiquitin (via CUE domain).

The protein resides in the cytoplasm. Its function is as follows. Connects the ubiquitin pathway to autophagy by functioning as a ubiquitin-ATG8 adapter and thus mediating autophagic clearance of ubiquitin conjugates under starvation conditions. The CUE5-dependent selective autophagy pathway plays an important role in clearance of cytotoxic protein aggregates. Not required for cytoplasmic to vacuole pathway (cvt), mitophagy, pexophagy, or ribophagy. This is Ubiquitin-binding protein CUE5 from Saccharomyces cerevisiae (strain ATCC 204508 / S288c) (Baker's yeast).